Consider the following 443-residue polypeptide: Phosphoglucosamine mutase (443 aa).

Ser102 functions as the Phosphoserine intermediate in the catalytic mechanism. Mg(2+)-binding residues include Ser102, Asp241, Asp243, and Asp245. Ser102 is modified (phosphoserine).

Belongs to the phosphohexose mutase family. The cofactor is Mg(2+). In terms of processing, activated by phosphorylation.

The enzyme catalyses alpha-D-glucosamine 1-phosphate = D-glucosamine 6-phosphate. In terms of biological role, catalyzes the conversion of glucosamine-6-phosphate to glucosamine-1-phosphate. The protein is Phosphoglucosamine mutase of Acinetobacter baylyi (strain ATCC 33305 / BD413 / ADP1).